The chain runs to 688 residues: Pescadillo homolog (688 aa).

The 120-residue stretch at E351–P470 folds into the BRCT domain. Disordered stretches follow at residues R411–M442 and A496–R688. Positions P412–Q424 are enriched in pro residues. The stretch at A496 to A536 forms a coiled coil. Acidic residues-rich tracts occupy residues E510 to V519, E530 to V544, G554 to D565, and E576 to E589. Positions K619 to Q634 are enriched in basic residues. Residues L627–K686 adopt a coiled-coil conformation. Residues K635–K646 are compositionally biased toward basic and acidic residues.

Belongs to the pescadillo family. Component of the NOP7 complex, composed of ERB1, NOP7 and YTM1. The complex is held together by ERB1, which interacts with NOP7 via its N-terminal domain and with YTM1 via a high-affinity interaction between the seven-bladed beta-propeller domains of the 2 proteins. The NOP7 complex associates with the 66S pre-ribosome.

It is found in the nucleus. The protein resides in the nucleolus. It localises to the nucleoplasm. Its function is as follows. Component of the NOP7 complex, which is required for maturation of the 25S and 5.8S ribosomal RNAs and formation of the 60S ribosome. This chain is Pescadillo homolog, found in Coccidioides immitis (strain RS) (Valley fever fungus).